The following is a 266-amino-acid chain: Hydroxyethylthiazole kinase (266 aa).

Met41 provides a ligand contact to substrate. The ATP site is built by Arg117 and Ser163. Ala190 is a substrate binding site.

The protein belongs to the Thz kinase family. It depends on Mg(2+) as a cofactor.

It catalyses the reaction 5-(2-hydroxyethyl)-4-methylthiazole + ATP = 4-methyl-5-(2-phosphooxyethyl)-thiazole + ADP + H(+). It functions in the pathway cofactor biosynthesis; thiamine diphosphate biosynthesis; 4-methyl-5-(2-phosphoethyl)-thiazole from 5-(2-hydroxyethyl)-4-methylthiazole: step 1/1. Catalyzes the phosphorylation of the hydroxyl group of 4-methyl-5-beta-hydroxyethylthiazole (THZ). The polypeptide is Hydroxyethylthiazole kinase (Histophilus somni (strain 129Pt) (Haemophilus somnus)).